A 576-amino-acid polypeptide reads, in one-letter code: FtsZ-localized protein C (576 aa).

As to quaternary structure, interacts with FtsZ filaments.

It localises to the cytoplasm. Its subcellular location is the cell inner membrane. In terms of biological role, membrane anchor for FtsZ. Binds and recruits FtsZ polymers to membranes early in the cell cycle. May also improve the efficiency of cytokinesis through the regulation of cell wall hydrolysis. This chain is FtsZ-localized protein C, found in Caulobacter vibrioides (strain NA1000 / CB15N) (Caulobacter crescentus).